A 55-amino-acid polypeptide reads, in one-letter code: Large ribosomal subunit protein bL33 (55 aa).

This sequence belongs to the bacterial ribosomal protein bL33 family.

In Allorhizobium ampelinum (strain ATCC BAA-846 / DSM 112012 / S4) (Agrobacterium vitis (strain S4)), this protein is Large ribosomal subunit protein bL33.